Consider the following 358-residue polypeptide: 3-isopropylmalate dehydrogenase (358 aa).

The substrate site is built by arginine 92, arginine 102, arginine 130, and aspartate 224. 3 residues coordinate Mg(2+): aspartate 224, aspartate 248, and aspartate 252. Residue 282–294 (GSAPDIAGQGIAN) coordinates NAD(+).

This sequence belongs to the isocitrate and isopropylmalate dehydrogenases family. LeuB type 1 subfamily. In terms of assembly, homodimer. It depends on Mg(2+) as a cofactor. The cofactor is Mn(2+).

It is found in the cytoplasm. It catalyses the reaction (2R,3S)-3-isopropylmalate + NAD(+) = 4-methyl-2-oxopentanoate + CO2 + NADH. The protein operates within amino-acid biosynthesis; L-leucine biosynthesis; L-leucine from 3-methyl-2-oxobutanoate: step 3/4. In terms of biological role, catalyzes the oxidation of 3-carboxy-2-hydroxy-4-methylpentanoate (3-isopropylmalate) to 3-carboxy-4-methyl-2-oxopentanoate. The product decarboxylates to 4-methyl-2 oxopentanoate. The polypeptide is 3-isopropylmalate dehydrogenase (Bordetella avium (strain 197N)).